The chain runs to 311 residues: Lipid A biosynthesis acyltransferase (311 aa).

The helical transmembrane segment at 19 to 39 (WLFWLGVAIWRSILCLPYPIL) threads the bilayer. An HXXXXD motif motif is present at residues 134–139 (HFLTLE).

Belongs to the LpxL/LpxM/LpxP family.

The protein localises to the cell inner membrane. The catalysed reaction is an alpha-Kdo-(2-&gt;4)-alpha-Kdo-(2-&gt;6)-lipid IVA + a fatty acyl-[ACP] = an alpha-Kdo-(2-&gt;4)-alpha-Kdo-(2-&gt;6)-(acyl)-lipid IVA + holo-[ACP]. It participates in glycolipid biosynthesis; KDO(2)-lipid A biosynthesis; KDO(2)-lipid A from CMP-3-deoxy-D-manno-octulosonate and lipid IV(A): step 3/4. The protein operates within bacterial outer membrane biogenesis; lipopolysaccharide biosynthesis. Catalyzes the transfer of an acyl chain from an acyl-[acyl-carrier-protein] (ACP) to a Kdo(2)-lipid IV(A) to form a Kdo(2)-(acyl)-lipid IV(A). This is Lipid A biosynthesis acyltransferase from Haemophilus influenzae (strain ATCC 51907 / DSM 11121 / KW20 / Rd).